The chain runs to 1021 residues: PDZ domain-containing protein 7 (1021 aa).

PDZ domains lie at 86–156 (AVRV…LTSS) and 210–279 (IVHL…EVLK). A compositionally biased stretch (low complexity) spans 324–344 (SSSSVSSYASSAPCSSGSLPS). Disordered regions lie at residues 324–345 (SSSSVSSYASSAPCSSGSLPSD), 431–495 (ITRS…DSRS), and 724–814 (RRGA…HRPR). The segment covering 729–744 (APPPQPPPVAPRPPRP) has biased composition (pro residues). The span at 758–767 (QQNQSQTPAQ) shows a compositional bias: polar residues. Over residues 772–794 (SRSRSRSRSHSRGQGKSPGRRRS) the composition is skewed to basic residues. Low complexity predominate over residues 799–808 (PIATAATANG). In terms of domain architecture, PDZ 3 spans 858–930 (TITLSKMKQS…QRAVDTIRRA (73 aa)). Residues 992–1021 (QLQQSLSSALKVPQSIPKLSPILKDPHDPS) form a disordered region.

In terms of assembly, homodimerizes (via PDZ2 domain). Component of USH2 complex, composed of ADGRV1, PDZD7, USH2A and WHRN. Interacts (via PDZ domains) with WHRN; the interaction is direct. Interacts with USH1G. Interacts with ADGRV1 (via the cytoplasmic region). Interacts with USH2A (via the cytoplasmic region). Interacts with MYO7A (via MyTH4-FERM domains). Isoform 1 is expressed in developing and adult cochlea but not retina. Isoform 2 is expressed in developing and adult cochlea and retina. Isoform 3 is expressed in adult cochlea and retina. Isoform 4 is expressed in retina and developing cochlea but not adult cochlea. Isoform 5 is expressed in adult cochlea but not in developing cochlea or retina.

It localises to the cell projection. It is found in the cilium. Its subcellular location is the nucleus. The protein localises to the stereocilium. In cochlear developing hair cells, essential in organizing the USH2 complex at stereocilia ankle links. Blocks inhibition of adenylate cyclase activity mediated by ADGRV1. The protein is PDZ domain-containing protein 7 of Mus musculus (Mouse).